The following is a 689-amino-acid chain: Probable E3 ubiquitin ligase complex SCF subunit sconB (689 aa).

Composition is skewed to basic and acidic residues over residues 1–12 (MDAHELSFRDGH) and 19–29 (MKDECASEEKA). The tract at residues 1 to 66 (MDAHELSFRD…STQDKPHSFN (66 aa)) is disordered. An F-box domain is found at 186–232 (IDFLTALPPEISFKILCYLDTTSLCKAAQVSRRWRALADDDVVWHRM). The interval 267–306 (AATWDVSEQPAETESNSATIDTAASGSKRKPESDKEDTAM) is disordered. Residues 276–291 (PAETESNSATIDTAAS) are compositionally biased toward polar residues. A compositionally biased stretch (basic and acidic residues) spans 295-306 (RKPESDKEDTAM). WD repeat units follow at residues 358 to 395 (GHSN…ELRT), 398 to 437 (GHRS…STYS), 439 to 475 (HRGG…TCLL), 477 to 518 (GHTD…RTFH), 572 to 615 (DTPS…CLRT), 616 to 655 (FFGH…CERT), and 658 to 689 (GHSG…SFQT).

It belongs to the WD repeat MET30/SCONB/SCON-2 family. In terms of assembly, component of the SCF(sconB) E3 ubiquitin ligase complex.

Its pathway is protein modification; protein ubiquitination. Functionally, component of the SCF(sconB) E3 ubiquitin ligase complex involved in the regulation of sulfur metabolite repression, probably by mediating the inactivation or degradation of the metR transcription factor. The chain is Probable E3 ubiquitin ligase complex SCF subunit sconB (sconB) from Neosartorya fischeri (strain ATCC 1020 / DSM 3700 / CBS 544.65 / FGSC A1164 / JCM 1740 / NRRL 181 / WB 181) (Aspergillus fischerianus).